The following is a 515-amino-acid chain: 2,3-bisphosphoglycerate-independent phosphoglycerate mutase (515 aa).

Asp-14 and Ser-63 together coordinate Mn(2+). Ser-63 is an active-site residue. Substrate contacts are provided by residues His-124, 154–155, Arg-186, Arg-192, 259–262, and Lys-334; these read RD and RADR. Positions 401, 405, 442, 443, and 460 each coordinate Mn(2+).

It belongs to the BPG-independent phosphoglycerate mutase family. It depends on Mg(2+) as a cofactor. Mn(2+) is required as a cofactor.

The catalysed reaction is (2R)-2-phosphoglycerate = (2R)-3-phosphoglycerate. It functions in the pathway carbohydrate degradation; glycolysis; pyruvate from D-glyceraldehyde 3-phosphate: step 3/5. With respect to regulation, activity is not affected by 2,3-bisphosphoglycerate. Functionally, catalyzes the interconversion of 2-phosphoglycerate and 3-phosphoglycerate. In Brugia malayi (Filarial nematode worm), this protein is 2,3-bisphosphoglycerate-independent phosphoglycerate mutase.